The chain runs to 64 residues: MTKITIVKCPQCGTNVEWGEQSPHRPFCSKKCQMIDFGEWADEENAIPGAPDMSDSDGWSEEQY.

Residues C9, C12, C28, and C32 each coordinate Zn(2+). The tract at residues 42 to 64 (DEENAIPGAPDMSDSDGWSEEQY) is disordered. Acidic residues predominate over residues 54–64 (SDSDGWSEEQY).

It belongs to the DNA gyrase inhibitor YacG family. In terms of assembly, interacts with GyrB. Zn(2+) is required as a cofactor.

In terms of biological role, inhibits all the catalytic activities of DNA gyrase by preventing its interaction with DNA. Acts by binding directly to the C-terminal domain of GyrB, which probably disrupts DNA binding by the gyrase. The protein is DNA gyrase inhibitor YacG of Vibrio vulnificus (strain CMCP6).